The chain runs to 1222 residues: Deubiquitinating protein VCPIP1 (1222 aa).

The span at 1-21 (MSQPPPPPPPLPPPPPPPEAP) shows a compositional bias: pro residues. The segment at 1–36 (MSQPPPPPPPLPPPPPPPEAPQTPSSLASAAASGGL) is disordered. Residues 25-36 (SSLASAAASGGL) show a composition bias toward low complexity. Residues 208-361 (LIPVHVDGDG…RNHYIPLVGI (154 aa)) form the OTU domain. Asp216 is an active-site residue. Cys219 serves as the catalytic Nucleophile. The active site involves His354. The residue at position 408 (Lys408) is an N6-acetyllysine. Disordered stretches follow at residues 725 to 776 (SVMQ…KEKK), 989 to 1009 (EATT…LGSG), and 1024 to 1074 (AFQG…VFTA). Ser747 and Ser757 each carry phosphoserine. Low complexity predominate over residues 755–771 (PSSAPATPTKAPYSPTT). Phosphothreonine is present on Thr763. Phosphoserine is present on residues Ser768, Ser994, and Ser998. A compositionally biased stretch (basic and acidic residues) spans 1041-1050 (LDPRARETSV). Polar residues predominate over residues 1057–1074 (GTDFSNSSTKTEPSVFTA). The residue at position 1077 (Ser1077) is a Phosphoserine. 2 disordered regions span residues 1113–1175 (VSSI…TETT) and 1188–1222 (ATRS…MDHS). Positions 1143-1157 (VVSSSAKSGSLQTGL) are enriched in polar residues. Positions 1163-1175 (LTGGTENLNTETT) are enriched in low complexity. Phosphoserine is present on Ser1198. A compositionally biased stretch (acidic residues) spans 1200–1209 (EELEEMDSQD). Residue Ser1207 is modified to Phosphoserine; by ATM. Residues 1210 to 1222 (AEMTNTTEPMDHS) are compositionally biased toward polar residues.

In terms of assembly, binds VCP and the ternary complex containing STX5A, NSFL1C and VCP. In terms of processing, phosphorylated at Ser-1207 by ATM or ATR following induction of covalent DNA-protein cross-links (DPCs).

Its subcellular location is the nucleus. It localises to the cytoplasm. The protein resides in the endoplasmic reticulum. It is found in the golgi apparatus. The protein localises to the golgi stack. The enzyme catalyses Thiol-dependent hydrolysis of ester, thioester, amide, peptide and isopeptide bonds formed by the C-terminal Gly of ubiquitin (a 76-residue protein attached to proteins as an intracellular targeting signal).. In terms of biological role, deubiquitinating enzyme involved in DNA repair and reassembly of the Golgi apparatus and the endoplasmic reticulum following mitosis. Necessary for VCP-mediated reassembly of Golgi stacks after mitosis. Plays a role in VCP-mediated formation of transitional endoplasmic reticulum (tER). Mediates dissociation of the ternary complex containing STX5A, NSFL1C and VCP. Also involved in DNA repair following phosphorylation by ATM or ATR: acts by catalyzing deubiquitination of SPRTN, thereby promoting SPRTN recruitment to chromatin and subsequent proteolytic cleavage of covalent DNA-protein cross-links (DPCs). Hydrolyzes 'Lys-11'- and 'Lys-48'-linked polyubiquitin chains. (Microbial infection) Regulates the duration of C.botulinum neurotoxin type A (BoNT/A) intoxication by catalyzing deubiquitination of Botulinum neurotoxin A light chain (LC), thereby preventing LC degradation by the proteasome, and accelerating botulinum neurotoxin intoxication in patients. The chain is Deubiquitinating protein VCPIP1 from Homo sapiens (Human).